Consider the following 290-residue polypeptide: Nucleoid occlusion protein (290 aa).

The segment at residues glutamate 153–leucine 172 is a DNA-binding region (H-T-H motif).

This sequence belongs to the ParB family.

The protein resides in the cytoplasm. Its subcellular location is the nucleoid. Its function is as follows. Effects nucleoid occlusion by binding relatively nonspecifically to DNA and preventing the assembly of the division machinery in the vicinity of the nucleoid, especially under conditions that disturb the cell cycle. It helps to coordinate cell division and chromosome segregation by preventing the formation of the Z ring through the nucleoid, which would cause chromosome breakage. This Bacillus anthracis (strain A0248) protein is Nucleoid occlusion protein.